The chain runs to 315 residues: 2-oxoglutarate and iron-dependent oxygenase domain-containing protein 3 (315 aa).

The disordered stretch occupies residues 1–32 (MAPQRRGPPRVPEGNSAAERRHANSTKKDRLP). At 1 to 41 (MAPQRRGPPRVPEGNSAAERRHANSTKKDRLPQEAQRTWLR) the chain is on the cytoplasmic side. Basic and acidic residues predominate over residues 18-32 (AERRHANSTKKDRLP). Residues 42-62 (IVALGVSLALVTFLLWSSAGI) form a helical; Signal-anchor for type II membrane protein membrane-spanning segment. Residues 63–315 (DDDVAEVVAH…DHGIEDPVLT (253 aa)) are Lumenal-facing. The region spanning 203–305 (KPTFFSRINS…AITIAFTCNP (103 aa)) is the Fe2OG dioxygenase domain. Asparagine 211 carries an N-linked (GlcNAc...) asparagine glycan. The Fe cation site is built by histidine 226 and aspartate 228. The N-linked (GlcNAc...) asparagine glycan is linked to asparagine 263. Histidine 284 contributes to the Fe cation binding site. Residue arginine 294 is part of the active site. Arginine 294 lines the 2-oxoglutarate pocket.

It belongs to the OGFOD3 family. Fe(2+) serves as cofactor. The cofactor is L-ascorbate.

It is found in the membrane. This is 2-oxoglutarate and iron-dependent oxygenase domain-containing protein 3 (Ogfod3) from Rattus norvegicus (Rat).